A 635-amino-acid chain; its full sequence is Threonine--tRNA ligase (635 aa).

Residues methionine 1 to threonine 58 enclose the TGS domain. The catalytic stretch occupies residues aspartate 237 to proline 528. Zn(2+) is bound by residues cysteine 328, histidine 379, and histidine 505.

The protein belongs to the class-II aminoacyl-tRNA synthetase family. In terms of assembly, homodimer. It depends on Zn(2+) as a cofactor.

The protein localises to the cytoplasm. The enzyme catalyses tRNA(Thr) + L-threonine + ATP = L-threonyl-tRNA(Thr) + AMP + diphosphate + H(+). Catalyzes the attachment of threonine to tRNA(Thr) in a two-step reaction: L-threonine is first activated by ATP to form Thr-AMP and then transferred to the acceptor end of tRNA(Thr). Also edits incorrectly charged L-seryl-tRNA(Thr). The sequence is that of Threonine--tRNA ligase from Chlamydia felis (strain Fe/C-56) (Chlamydophila felis).